A 318-amino-acid chain; its full sequence is UDP-N-acetylenolpyruvoylglucosamine reductase (318 aa).

One can recognise an FAD-binding PCMH-type domain in the interval 38–204; that stretch reads IGGVCPVIVE…LGIEILLKEG (167 aa). R182 is a catalytic residue. Over residues 212 to 229 the composition is skewed to basic and acidic residues; sequence SLKDKRDRRNSSQPENKK. Residues 212 to 232 form a disordered region; sequence SLKDKRDRRNSSQPENKKSAG. S233 functions as the Proton donor in the catalytic mechanism. Residue E310 is part of the active site.

It belongs to the MurB family. Requires FAD as cofactor.

Its subcellular location is the cytoplasm. The enzyme catalyses UDP-N-acetyl-alpha-D-muramate + NADP(+) = UDP-N-acetyl-3-O-(1-carboxyvinyl)-alpha-D-glucosamine + NADPH + H(+). The protein operates within cell wall biogenesis; peptidoglycan biosynthesis. In terms of biological role, cell wall formation. This Leptospira interrogans serogroup Icterohaemorrhagiae serovar copenhageni (strain Fiocruz L1-130) protein is UDP-N-acetylenolpyruvoylglucosamine reductase.